A 372-amino-acid polypeptide reads, in one-letter code: MAFKQLVAAISLALSLTTANAAVVKEKRATCSNGATVGDASCCAWFDVLDDIQQNLFQGGQCGAEAHESIRLVFHDAIAISPAMEAQGKFGGGGADGSIMIFDDIEPNFHPNIGLDEIINLQKPFVQKHGVTPGAFIAFAGAVALSNCPGAPQMNFFTGRAPATQPAPDGLVPEPFHTVDQIIARVNDAGEFDELELVWMLSAHSVAAVNDVDPTVQGLPFDSTPGIFDSQFFVETQFRGILFPGSGGNQGEVESGMAGEIRIQTDHTLARDSRTACEWQSFVNNQSKLVSDFQFIFLALTQLGQDPNAMTDCSDVIPISKPIPGNLPFSFFPPGKSMKDVEQACAETPFPSLVTLPGPATSVARIPPPPGA.

The first 21 residues, 1-21 (MAFKQLVAAISLALSLTTANA), serve as a signal peptide directing secretion. The propeptide occupies 22-28 (AVVKEKR). 4 cysteine pairs are disulfide-bonded: Cys31-Cys43, Cys42-Cys313, Cys62-Cys148, and Cys277-Cys345. His75 serves as the catalytic Proton acceptor. Positions 76, 94, 96, and 98 each coordinate Ca(2+). Residue His204 coordinates heme b. Ca(2+)-binding residues include Ser205, Asp222, Thr224, Ile227, and Asp229. The N-linked (GlcNAc...) asparagine glycan is linked to Asn285.

It belongs to the peroxidase family. Ligninase subfamily. It depends on heme b as a cofactor. The cofactor is Ca(2+).

It catalyses the reaction 1-(3,4-dimethoxyphenyl)-2-(2-methoxyphenoxy)propane-1,3-diol + H2O2 = 3,4-dimethoxybenzaldehyde + guaiacol + glycolaldehyde + H2O. The enzyme catalyses 2 (3,4-dimethoxyphenyl)methanol + H2O2 = 2 (3,4-dimethoxyphenyl)methanol radical + 2 H2O. Its pathway is secondary metabolite metabolism; lignin degradation. Functionally, depolymerization of lignin. Catalyzes the C(alpha)-C(beta) cleavage of the propyl side chains of lignin. This is Ligninase A (LIPA) from Phanerodontia chrysosporium (White-rot fungus).